The sequence spans 549 residues: Glucose-6-phosphate isomerase (549 aa).

The active-site Proton donor is the Glu355. Active-site residues include His387 and Lys515.

Belongs to the GPI family.

The protein localises to the cytoplasm. The catalysed reaction is alpha-D-glucose 6-phosphate = beta-D-fructose 6-phosphate. The protein operates within carbohydrate biosynthesis; gluconeogenesis. Its pathway is carbohydrate degradation; glycolysis; D-glyceraldehyde 3-phosphate and glycerone phosphate from D-glucose: step 2/4. Catalyzes the reversible isomerization of glucose-6-phosphate to fructose-6-phosphate. This Haemophilus influenzae (strain PittEE) protein is Glucose-6-phosphate isomerase.